The chain runs to 881 residues: Valine--tRNA ligase (881 aa).

The 'HIGH' region motif lies at 49–59 (PNVTGKLHLGH). Residues 526–530 (KMSKS) carry the 'KMSKS' region motif. Lysine 529 provides a ligand contact to ATP. Residues 810–881 (LADLINLDEE…VRQRLADLEK (72 aa)) adopt a coiled-coil conformation.

Belongs to the class-I aminoacyl-tRNA synthetase family. ValS type 1 subfamily. In terms of assembly, monomer.

Its subcellular location is the cytoplasm. It catalyses the reaction tRNA(Val) + L-valine + ATP = L-valyl-tRNA(Val) + AMP + diphosphate. Catalyzes the attachment of valine to tRNA(Val). As ValRS can inadvertently accommodate and process structurally similar amino acids such as threonine, to avoid such errors, it has a 'posttransfer' editing activity that hydrolyzes mischarged Thr-tRNA(Val) in a tRNA-dependent manner. The chain is Valine--tRNA ligase from Bacillus cereus (strain ATCC 14579 / DSM 31 / CCUG 7414 / JCM 2152 / NBRC 15305 / NCIMB 9373 / NCTC 2599 / NRRL B-3711).